The primary structure comprises 422 residues: Cytokine receptor-like factor 1 (422 aa).

The first 37 residues, 1–37 (MPAGRRGPAAQSARRPPPLLPLLLLLCVLGAPRAGSG), serve as a signal peptide directing secretion. In terms of domain architecture, Ig-like C2-type spans 38-131 (AHTAVISPQD…SILAGSCLYV (94 aa)). 3 N-linked (GlcNAc...) asparagine glycosylation sites follow: Asn-92, Asn-104, and Asn-140. Fibronectin type-III domains follow at residues 137 to 232 (KPVN…ILDV) and 237 to 341 (PPPD…TPRS). Residues Cys-143 and Cys-153 are joined by a disulfide bond. The N-linked (GlcNAc...) asparagine glycan is linked to Asn-168. An intrachain disulfide couples Cys-184 to Cys-195. Ser-219 is modified (phosphoserine). Asn-292 carries an N-linked (GlcNAc...) asparagine glycan. The short motif at 327-331 (WSEWS) is the WSXWS motif element. Residues 332 to 363 (HPTAASTPRSERPGPGGGACEPRGGEPSSGPV) form a disordered region. Asn-382 carries an N-linked (GlcNAc...) asparagine glycan. A disordered region spans residues 399-422 (HKTRNQDEGILPSGRRGTARGPAR).

Belongs to the type I cytokine receptor family. Type 3 subfamily. Forms covalent di- and tetramers. Forms a heteromeric complex with cardiotrophin-like cytokine CLCF1/CLC; the CRLF1-CLCF1 complex is a ligand for the ciliary neurotrophic factor receptor/CNTFR. The CRLF1-CLCF1 heterodimer binds SORL1 (via N-terminal ectodomain); within this complex, the interaction is mediated predominantly by the CRLF1 moiety. The tripartite signaling complex formed by CRLF1, CLCF1 and CNTFR also binds SORL1. As to expression, highest levels of expression observed in spleen, thymus, lymph node, appendix, bone marrow, stomach, placenta, heart, thyroid and ovary. Strongly expressed also in fetal lung.

It localises to the secreted. Its function is as follows. In complex with CLCF1, forms a heterodimeric neurotropic cytokine that plays a crucial role during neuronal development. May also play a regulatory role in the immune system. The polypeptide is Cytokine receptor-like factor 1 (CRLF1) (Homo sapiens (Human)).